We begin with the raw amino-acid sequence, 260 residues long: Cytochrome c oxidase subunit 3 (260 aa).

Helical transmembrane passes span 14 to 34 (PWPL…ILWF), 41 to 61 (LLLA…RDVI), 81 to 101 (GMIL…WAFF), 126 to 146 (FLVP…VTWA), 158 to 178 (AIQG…LQAW), 196 to 216 (FFVA…FLFI), and 238 to 258 (AWYW…ICWW).

Belongs to the cytochrome c oxidase subunit 3 family. As to quaternary structure, component of the cytochrome c oxidase (complex IV, CIV), a multisubunit enzyme composed of a catalytic core of 3 subunits and several supernumerary subunits. The complex exists as a monomer or a dimer and forms supercomplexes (SCs) in the inner mitochondrial membrane with ubiquinol-cytochrome c oxidoreductase (cytochrome b-c1 complex, complex III, CIII).

Its subcellular location is the mitochondrion inner membrane. The catalysed reaction is 4 Fe(II)-[cytochrome c] + O2 + 8 H(+)(in) = 4 Fe(III)-[cytochrome c] + 2 H2O + 4 H(+)(out). In terms of biological role, component of the cytochrome c oxidase, the last enzyme in the mitochondrial electron transport chain which drives oxidative phosphorylation. The respiratory chain contains 3 multisubunit complexes succinate dehydrogenase (complex II, CII), ubiquinol-cytochrome c oxidoreductase (cytochrome b-c1 complex, complex III, CIII) and cytochrome c oxidase (complex IV, CIV), that cooperate to transfer electrons derived from NADH and succinate to molecular oxygen, creating an electrochemical gradient over the inner membrane that drives transmembrane transport and the ATP synthase. Cytochrome c oxidase is the component of the respiratory chain that catalyzes the reduction of oxygen to water. Electrons originating from reduced cytochrome c in the intermembrane space (IMS) are transferred via the dinuclear copper A center (CU(A)) of subunit 2 and heme A of subunit 1 to the active site in subunit 1, a binuclear center (BNC) formed by heme A3 and copper B (CU(B)). The BNC reduces molecular oxygen to 2 water molecules using 4 electrons from cytochrome c in the IMS and 4 protons from the mitochondrial matrix. This is Cytochrome c oxidase subunit 3 (COIII) from Patiria pectinifera (Starfish).